A 169-amino-acid chain; its full sequence is 2-C-methyl-D-erythritol 2,4-cyclodiphosphate synthase (169 aa).

Residues aspartate 13 and histidine 15 each coordinate a divalent metal cation. 4-CDP-2-C-methyl-D-erythritol 2-phosphate contacts are provided by residues 13-15 (DVH) and 39-40 (HS). Position 47 (histidine 47) interacts with a divalent metal cation. 4-CDP-2-C-methyl-D-erythritol 2-phosphate contacts are provided by residues 61–63 (DIG), 66–70 (FPDTD), phenylalanine 144, and arginine 147.

Belongs to the IspF family. Homotrimer. It depends on a divalent metal cation as a cofactor.

The catalysed reaction is 4-CDP-2-C-methyl-D-erythritol 2-phosphate = 2-C-methyl-D-erythritol 2,4-cyclic diphosphate + CMP. It functions in the pathway isoprenoid biosynthesis; isopentenyl diphosphate biosynthesis via DXP pathway; isopentenyl diphosphate from 1-deoxy-D-xylulose 5-phosphate: step 4/6. In terms of biological role, involved in the biosynthesis of isopentenyl diphosphate (IPP) and dimethylallyl diphosphate (DMAPP), two major building blocks of isoprenoid compounds. Catalyzes the conversion of 4-diphosphocytidyl-2-C-methyl-D-erythritol 2-phosphate (CDP-ME2P) to 2-C-methyl-D-erythritol 2,4-cyclodiphosphate (ME-CPP) with a corresponding release of cytidine 5-monophosphate (CMP). The chain is 2-C-methyl-D-erythritol 2,4-cyclodiphosphate synthase from Cupriavidus pinatubonensis (strain JMP 134 / LMG 1197) (Cupriavidus necator (strain JMP 134)).